The primary structure comprises 375 residues: Protein GOLM2 (375 aa).

The Cytoplasmic portion of the chain corresponds to 1-12; that stretch reads MVGFGANRRGGR. The chain crosses the membrane as a helical; Signal-anchor for type II membrane protein span at residues 13-33; that stretch reads LPSFLLAALLLVIAVLAFNCW. Residues 34–198 adopt a coiled-coil conformation; it reads NAASRQAVLR…REQKATQRIQ (165 aa). The Lumenal portion of the chain corresponds to 34 to 375; it reads NAASRQAVLR…SKPRFGDGVL (342 aa). Disordered stretches follow at residues 81 to 102, 193 to 327, and 342 to 375; these read LEQKEADYSQLSSQLQARDGQV, ATQR…DSQN, and RAVGLQKMKQNDEERDLQNDLVDYSKPRFGDGVL. Basic and acidic residues-rich tracts occupy residues 193–204 and 350–375; these read ATQRIQSSKDAE and KQNDEERDLQNDLVDYSKPRFGDGVL.

The protein belongs to the GOLM family.

Its subcellular location is the membrane. In Gallus gallus (Chicken), this protein is Protein GOLM2 (GOLM2).